Consider the following 147-residue polypeptide: uncharacterized protein (147 aa).

One can recognise an N-acetyltransferase domain in the interval 7 to 147; it reads LEINYKTDEL…GHDVLVWAPK (141 aa).

This is an uncharacterized protein from Staphylococcus haemolyticus (strain JCSC1435).